The sequence spans 315 residues: D-erythronate dehydrogenase (315 aa).

S119, Y143, and K147 together coordinate NAD(+). Y143 (proton acceptor) is an active-site residue.

It belongs to the NAD(P)-dependent epimerase/dehydratase family.

The catalysed reaction is D-erythronate + NAD(+) = 2-dehydro-D-erythronate + NADH + H(+). Catalyzes oxidation of D-erythronate to 2-oxo-tetronate. Can use either NAD(+) or NADP(+) as cosubstrate, with a preference for NAD(+). In Haemophilus influenzae (strain ATCC 51907 / DSM 11121 / KW20 / Rd), this protein is D-erythronate dehydrogenase.